The chain runs to 91 residues: Small ribosomal subunit protein uS15 (91 aa).

The protein belongs to the universal ribosomal protein uS15 family. As to quaternary structure, part of the 30S ribosomal subunit. Forms a bridge to the 50S subunit in the 70S ribosome, contacting the 23S rRNA.

Its function is as follows. One of the primary rRNA binding proteins, it binds directly to 16S rRNA where it helps nucleate assembly of the platform of the 30S subunit by binding and bridging several RNA helices of the 16S rRNA. In terms of biological role, forms an intersubunit bridge (bridge B4) with the 23S rRNA of the 50S subunit in the ribosome. This Rickettsia bellii (strain OSU 85-389) protein is Small ribosomal subunit protein uS15.